The following is a 500-amino-acid chain: Protein-cysteine N-palmitoyltransferase Rasp (500 aa).

Helical transmembrane passes span 15–35 (IFVY…KIYG), 73–93 (GDFI…QGFI), 105–125 (FIGV…MVLL), 134–154 (IVSL…WILC), 206–226 (SLVQ…GPII), 243–263 (LGFV…QCAL), 293–313 (FMGQ…IAFA), 372–392 (LTFA…IWSI), 429–449 (LYAM…VYFI), and 461–481 (GAYL…YCFF). Residue histidine 381 is part of the active site.

Belongs to the membrane-bound acyltransferase family. HHAT subfamily.

The protein resides in the membrane. The catalysed reaction is N-terminal L-cysteinyl-[protein] + hexadecanoyl-CoA = N-terminal N-hexadecanoyl-L-cysteinyl-[protein] + CoA + H(+). It carries out the reaction N-terminal L-cysteinyl-[protein]-C-terminal glycyl cholesterol ester + hexadecanoyl-CoA = N-terminal N-hexadecanoyl-L-cysteinyl-[protein]-C-terminal glycyl cholesterol ester + CoA + H(+). Required in hedgehog (hh) expressing cells for production of appropriate signaling activity in embryos and in the imaginal precursors of adult tissues. Acts within the secretory pathway to catalyze N-terminal palmitoylation of Hh; this lipid modification is required for the embryonic and larval patterning activities of the Hh signal. Not required for Wg signaling. This Drosophila melanogaster (Fruit fly) protein is Protein-cysteine N-palmitoyltransferase Rasp (rasp).